The chain runs to 879 residues: Prostaglandin F2 receptor negative regulator (879 aa).

The first 25 residues, 1-25 (MGRLASRPLLLALLSLALCRGRVVR), serve as a signal peptide directing secretion. 2 consecutive Ig-like C2-type domains span residues 26–129 (VPTA…ATVQ) and 149–268 (PSAR…KAVE). At 26–832 (VPTATLVRVV…MDVLNAFKYP (807 aa)) the chain is on the extracellular side. Disulfide bonds link Cys43-Cys119 and Cys169-Cys247. Asn44 carries N-linked (GlcNAc...) asparagine glycosylation. Thr271 carries the phosphothreonine modification. Ig-like C2-type domains lie at 276–394 (PSVL…EAVS), 406–536 (PDYQ…DVFS), 544–662 (ALED…AWSP), and 688–813 (PIFN…AEIH). N-linked (GlcNAc...) asparagine glycosylation is found at Asn286, Asn300, Asn383, and Asn413. Cysteines 299 and 373 form a disulfide. The short motif at 424–427 (PTEL) is the Endoplasmic reticulum retention signal element. Cys429 and Cys515 are joined by a disulfide. Asn525, Asn600, Asn618, and Asn691 each carry an N-linked (GlcNAc...) asparagine glycan. Cys571 and Cys655 are oxidised to a cystine. Residues 703 to 705 (RGD) carry the Cell attachment site motif. Cys711 and Cys793 are joined by a disulfide. Residues 833 to 853 (LLIGVGLSTVIGLLSCLIGYC) traverse the membrane as a helical segment. At 854–879 (SSHWCCKKEVQETRRERRRLMSMEMD) the chain is on the cytoplasmic side.

In terms of assembly, interacts with CD9 and CD81. Part of a complex composed of CD9, CD81 and IGSF8. Also seems to interact with CD63, CD82 and CD151.

The protein localises to the endoplasmic reticulum membrane. Its subcellular location is the golgi apparatus. It localises to the trans-Golgi network membrane. Inhibits the binding of prostaglandin F2-alpha (PGF2-alpha) to its specific FP receptor, by decreasing the receptor number rather than the affinity constant. Functional coupling with the prostaglandin F2-alpha receptor seems to occur. In myoblasts, associates with tetraspanins CD9 and CD81 to prevent myotube fusion during muscle regeneration. The sequence is that of Prostaglandin F2 receptor negative regulator (PTGFRN) from Homo sapiens (Human).